We begin with the raw amino-acid sequence, 361 residues long: Phospho-N-acetylmuramoyl-pentapeptide-transferase (361 aa).

The next 11 helical transmembrane spans lie at 10-30 (PGTGLQWSLGLIALILAACLI), 40-60 (LSLPLLLAGALSWLVCWIGVP), 84-104 (GTPTMGGLLLVPCGVVVGSLV), 107-127 (GDPRLLPIGLVTLAFMVIGGI), 147-167 (LLLQALAAGLFLLWAGLHGAI), 175-195 (WGWLLPIGLLIWPLGLFVFLA), 206-226 (LDGLAAGVGAIVLVGLSLQLM), 232-252 (GDPALAGYGAALAGAWLGFLL), 260-280 (VFMGDTGSLAMGAALSAIALL), 288-308 (LLMGGLLLAESLSVILQVWVF), and 341-361 (VVVSFWGISLLLVALGLVLVP).

It belongs to the glycosyltransferase 4 family. MraY subfamily. It depends on Mg(2+) as a cofactor.

It is found in the cell inner membrane. It catalyses the reaction UDP-N-acetyl-alpha-D-muramoyl-L-alanyl-gamma-D-glutamyl-meso-2,6-diaminopimeloyl-D-alanyl-D-alanine + di-trans,octa-cis-undecaprenyl phosphate = di-trans,octa-cis-undecaprenyl diphospho-N-acetyl-alpha-D-muramoyl-L-alanyl-D-glutamyl-meso-2,6-diaminopimeloyl-D-alanyl-D-alanine + UMP. It functions in the pathway cell wall biogenesis; peptidoglycan biosynthesis. Functionally, catalyzes the initial step of the lipid cycle reactions in the biosynthesis of the cell wall peptidoglycan: transfers peptidoglycan precursor phospho-MurNAc-pentapeptide from UDP-MurNAc-pentapeptide onto the lipid carrier undecaprenyl phosphate, yielding undecaprenyl-pyrophosphoryl-MurNAc-pentapeptide, known as lipid I. The protein is Phospho-N-acetylmuramoyl-pentapeptide-transferase of Synechococcus sp. (strain RCC307).